Here is a 425-residue protein sequence, read N- to C-terminus: Protein CLP1 homolog (425 aa).

ATP-binding positions include Glu18, Lys59, and 121–126 (DVGKST).

This sequence belongs to the Clp1 family. Clp1 subfamily.

Its subcellular location is the nucleus. In terms of biological role, required for endonucleolytic cleavage during polyadenylation-dependent pre-mRNA 3'-end formation. This Drosophila mojavensis (Fruit fly) protein is Protein CLP1 homolog (cbc).